The primary structure comprises 171 residues: Protein X (171 aa).

3 helical membrane passes run 11–31, 38–58, and 73–93; these read SWYQIFIAFSLTYTPIAIYSL, LAGIVNIFIFINCCVSFVYLM, and AVIALVWGIYTLVKIVDWLVI.

The protein localises to the virion membrane. The polypeptide is Protein X (VPX) (Mus musculus domesticus (western European house mouse)).